The sequence spans 218 residues: Cytochrome b6 (218 aa).

The chain crosses the membrane as a helical span at residues 35-55 (IFYCLGGITLVCFLIQFATGF). Residue Cys-38 coordinates heme c. 2 residues coordinate heme b: His-89 and His-103. 3 helical membrane-spanning segments follow: residues 93–113 (ASMM…TGGF), 119–139 (LTWI…VTGY), and 189–209 (LHTF…FLMI). 2 residues coordinate heme b: His-190 and His-205.

It belongs to the cytochrome b family. PetB subfamily. In terms of assembly, the 4 large subunits of the cytochrome b6-f complex are cytochrome b6, subunit IV (17 kDa polypeptide, PetD), cytochrome f and the Rieske protein, while the 4 small subunits are PetG, PetL, PetM and PetN. The complex functions as a dimer. Heme b is required as a cofactor. Requires heme c as cofactor.

Its subcellular location is the cellular thylakoid membrane. Its function is as follows. Component of the cytochrome b6-f complex, which mediates electron transfer between photosystem II (PSII) and photosystem I (PSI), cyclic electron flow around PSI, and state transitions. In Prochlorococcus marinus (strain NATL1A), this protein is Cytochrome b6.